The following is a 432-amino-acid chain: Serine--tRNA ligase (432 aa).

235–237 provides a ligand contact to L-serine; sequence TSE. Position 266-268 (266-268) interacts with ATP; that stretch reads RSE. Glu-289 contributes to the L-serine binding site. 353-356 contacts ATP; sequence EISS. Residue Ser-388 participates in L-serine binding.

This sequence belongs to the class-II aminoacyl-tRNA synthetase family. Type-1 seryl-tRNA synthetase subfamily. In terms of assembly, homodimer. The tRNA molecule binds across the dimer.

The protein resides in the cytoplasm. The catalysed reaction is tRNA(Ser) + L-serine + ATP = L-seryl-tRNA(Ser) + AMP + diphosphate + H(+). The enzyme catalyses tRNA(Sec) + L-serine + ATP = L-seryl-tRNA(Sec) + AMP + diphosphate + H(+). Its pathway is aminoacyl-tRNA biosynthesis; selenocysteinyl-tRNA(Sec) biosynthesis; L-seryl-tRNA(Sec) from L-serine and tRNA(Sec): step 1/1. In terms of biological role, catalyzes the attachment of serine to tRNA(Ser). Is also able to aminoacylate tRNA(Sec) with serine, to form the misacylated tRNA L-seryl-tRNA(Sec), which will be further converted into selenocysteinyl-tRNA(Sec). This is Serine--tRNA ligase from Paraburkholderia phymatum (strain DSM 17167 / CIP 108236 / LMG 21445 / STM815) (Burkholderia phymatum).